Consider the following 259-residue polypeptide: Probable transcriptional regulatory protein Noca_2383 (259 aa).

Belongs to the TACO1 family.

The protein localises to the cytoplasm. The chain is Probable transcriptional regulatory protein Noca_2383 from Nocardioides sp. (strain ATCC BAA-499 / JS614).